We begin with the raw amino-acid sequence, 428 residues long: Phosphomethylpyrimidine synthase (428 aa).

Substrate is bound by residues N66, M94, Y123, H162, 184 to 186, 225 to 228, and E264; these read SRG and DALR. H268 provides a ligand contact to Zn(2+). Y291 contacts substrate. Zn(2+) is bound at residue H332. The [4Fe-4S] cluster site is built by C408, C411, and C415.

Belongs to the ThiC family. It depends on [4Fe-4S] cluster as a cofactor.

The catalysed reaction is 5-amino-1-(5-phospho-beta-D-ribosyl)imidazole + S-adenosyl-L-methionine = 4-amino-2-methyl-5-(phosphooxymethyl)pyrimidine + CO + 5'-deoxyadenosine + formate + L-methionine + 3 H(+). Its pathway is cofactor biosynthesis; thiamine diphosphate biosynthesis. Its function is as follows. Catalyzes the synthesis of the hydroxymethylpyrimidine phosphate (HMP-P) moiety of thiamine from aminoimidazole ribotide (AIR) in a radical S-adenosyl-L-methionine (SAM)-dependent reaction. The sequence is that of Phosphomethylpyrimidine synthase from Sulfolobus acidocaldarius (strain ATCC 33909 / DSM 639 / JCM 8929 / NBRC 15157 / NCIMB 11770).